We begin with the raw amino-acid sequence, 223 residues long: Glutathione S-transferase alpha I (223 aa).

Position 1 is an N-acetylmethionine (Met1). An N-acetylalanine; in Glutathione S-transferase alpha I, N-terminally processed modification is found at Ala2. The region spanning 3-83 (RKPLLHYFNG…YVANKHNLYG (81 aa)) is the GST N-terminal domain. Residue Lys4 is modified to N6-succinyllysine. Residues Tyr9, Arg45, 54-55 (QV), and 67-68 (QT) contribute to the glutathione site. Residues 85 to 208 (DMKERALIDM…QPGSQRKPPM (124 aa)) enclose the GST C-terminal domain.

This sequence belongs to the GST superfamily. Alpha family. Homodimer or heterodimer of GSTA1 and GSTA2. As to expression, liver and lung.

Its subcellular location is the cytoplasm. It catalyses the reaction RX + glutathione = an S-substituted glutathione + a halide anion + H(+). It carries out the reaction prostaglandin A2 + glutathione = prostaglandin A2-S-(R)-glutathione. The enzyme catalyses prostaglandin J2 + glutathione = prostaglandin J2-S-(R)-glutathione. The catalysed reaction is (13S)-hydroperoxy-(9Z,11E)-octadecadienoate + 2 glutathione = (13S)-hydroxy-(9Z,11E)-octadecadienoate + glutathione disulfide + H2O. It catalyses the reaction androst-5-ene-3,17-dione = androst-4-ene-3,17-dione. Its function is as follows. Glutathione S-transferase that catalyzes the nucleophilic attack of the sulfur atom of glutathione on the electrophilic groups of a wide range of exogenous and endogenous compounds. Involved in the formation of glutathione conjugates of both prostaglandin A2 (PGA2) and prostaglandin J2 (PGJ2). It also catalyzes the isomerization of D5-androstene-3,17-dione (AD) into D4-androstene-3,17-dione and may therefore play an important role in hormone biosynthesis. Through its glutathione-dependent peroxidase activity toward the fatty acid hydroperoxide (13S)-hydroperoxy-(9Z,11E)-octadecadienoate/13-HPODE it is also involved in the metabolism of oxidized linoleic acid. The chain is Glutathione S-transferase alpha I from Oryctolagus cuniculus (Rabbit).